The following is a 217-amino-acid chain: Peptidyl-tRNA hydrolase (217 aa).

Tyrosine 14 contacts tRNA. The active-site Proton acceptor is histidine 19. The tRNA site is built by tyrosine 64, asparagine 66, and asparagine 113. The tract at residues 182–217 is disordered; sequence MNRINAPPPKPKREQKRSSDAPDSSSDTNTSNASDG. Positions 202–217 are enriched in low complexity; sequence APDSSSDTNTSNASDG.

Belongs to the PTH family. As to quaternary structure, monomer.

It localises to the cytoplasm. It catalyses the reaction an N-acyl-L-alpha-aminoacyl-tRNA + H2O = an N-acyl-L-amino acid + a tRNA + H(+). Hydrolyzes ribosome-free peptidyl-tRNAs (with 1 or more amino acids incorporated), which drop off the ribosome during protein synthesis, or as a result of ribosome stalling. Functionally, catalyzes the release of premature peptidyl moieties from peptidyl-tRNA molecules trapped in stalled 50S ribosomal subunits, and thus maintains levels of free tRNAs and 50S ribosomes. This Roseiflexus sp. (strain RS-1) protein is Peptidyl-tRNA hydrolase.